The chain runs to 566 residues: Liver carboxylesterase (566 aa).

An N-terminal signal peptide occupies residues 1 to 18 (MWLLPLVLTSLASSATWA). The N-linked (GlcNAc...) asparagine glycan is linked to N80. A disulfide bridge connects residues C88 and C117. S222 functions as the Acyl-ester intermediate in the catalytic mechanism. C274 and C285 form a disulfide bridge. E354 (charge relay system) is an active-site residue. Phosphoserine is present on S379. Catalysis depends on H467, which acts as the Charge relay system. Positions 563-566 (HAEL) match the Prevents secretion from ER motif.

Belongs to the type-B carboxylesterase/lipase family.

Its subcellular location is the endoplasmic reticulum lumen. The enzyme catalyses a carboxylic ester + H2O = an alcohol + a carboxylate + H(+). Activated by CHAPS at concentrations of up to 130 mM, higher concentrations reduce activity. In the presence of CHAPS, activity is stimulated by non-ionic detergents. Inhibited by the esterase inhibitors diisopropylfluorophosphate and phenylmethylsulfonyl fluoride. Its function is as follows. Involved in the detoxification of xenobiotics and in the activation of ester and amide prodrugs. Active towards triacylglycerides containing short-chain fatty acids from C2 to C6, and 1(3)-monoacylglycerols containing fatty acids from C2 to C12. Inactive on long-chain triacylglycerols and diacylglycerol. Hydrolyzes aromatic and alkyl esters and vitamin A acetate. The hydrolysis rate depends upon the amino acid promoiety and the esterification site of the prodrug. Aromatic promoieties are favored, highest rates are observed with phenylalanyl progdrugs, hydrolysis of valyl and isoleucyl prodrugs is less efficient. With floxuridine prodrugs, activity is higher on 5' monoesters than on 3' monoesters. With gemcitabine prodrugs, activity is higher on 3' monoesters than on 5' monoesters. This is Liver carboxylesterase from Sus scrofa (Pig).